A 586-amino-acid polypeptide reads, in one-letter code: Arginine--tRNA ligase (586 aa).

The short motif at 130 to 140 is the 'HIGH' region element; it reads ANPTGPMHVGH.

It belongs to the class-I aminoacyl-tRNA synthetase family. Monomer.

The protein resides in the cytoplasm. It carries out the reaction tRNA(Arg) + L-arginine + ATP = L-arginyl-tRNA(Arg) + AMP + diphosphate. This chain is Arginine--tRNA ligase, found in Methylobacterium sp. (strain 4-46).